The primary structure comprises 243 residues: UPF0758 protein SYNPCC7002_A0220 (243 aa).

One can recognise an MPN domain in the interval 112-235; sequence IIVDSPEAAA…FGSLRQKTAL (124 aa). Zn(2+)-binding residues include H184, H186, and D197. Positions 184–197 match the JAMM motif motif; sequence HNHPSGNVDPSPED.

It belongs to the UPF0758 family.

In Picosynechococcus sp. (strain ATCC 27264 / PCC 7002 / PR-6) (Agmenellum quadruplicatum), this protein is UPF0758 protein SYNPCC7002_A0220.